Reading from the N-terminus, the 78-residue chain is Exodeoxyribonuclease 7 small subunit (78 aa).

It belongs to the XseB family. Heterooligomer composed of large and small subunits.

It localises to the cytoplasm. The enzyme catalyses Exonucleolytic cleavage in either 5'- to 3'- or 3'- to 5'-direction to yield nucleoside 5'-phosphates.. Functionally, bidirectionally degrades single-stranded DNA into large acid-insoluble oligonucleotides, which are then degraded further into small acid-soluble oligonucleotides. This chain is Exodeoxyribonuclease 7 small subunit, found in Actinobacillus succinogenes (strain ATCC 55618 / DSM 22257 / CCUG 43843 / 130Z).